A 199-amino-acid chain; its full sequence is GTP cyclohydrolase-2 (199 aa).

52–56 (RMHSE) lines the GTP pocket. 3 residues coordinate Zn(2+): Cys57, Cys68, and Cys70. GTP contacts are provided by residues Gln73, 94 to 96 (EGR), and Thr116. Catalysis depends on Asp128, which acts as the Proton acceptor. The active-site Nucleophile is Arg130. The GTP site is built by Thr151 and Lys156.

It belongs to the GTP cyclohydrolase II family. Requires Zn(2+) as cofactor.

The catalysed reaction is GTP + 4 H2O = 2,5-diamino-6-hydroxy-4-(5-phosphoribosylamino)-pyrimidine + formate + 2 phosphate + 3 H(+). Its pathway is cofactor biosynthesis; riboflavin biosynthesis; 5-amino-6-(D-ribitylamino)uracil from GTP: step 1/4. Functionally, catalyzes the conversion of GTP to 2,5-diamino-6-ribosylamino-4(3H)-pyrimidinone 5'-phosphate (DARP), formate and pyrophosphate. The chain is GTP cyclohydrolase-2 from Aliivibrio salmonicida (strain LFI1238) (Vibrio salmonicida (strain LFI1238)).